The sequence spans 90 residues: Progonadoliberin-3 (90 aa).

The signal sequence occupies residues Met1–Cys23. Residue Gln24 is modified to Pyrrolidone carboxylic acid. Gly33 bears the Glycine amide mark.

It belongs to the GnRH family. Expressed in neuron cell bodies of the nucleus olfactoretinalis.

The protein localises to the secreted. Stimulates the secretion of gonadotropins. This is Progonadoliberin-3 (gnrh3) from Oryzias latipes (Japanese rice fish).